A 127-amino-acid chain; its full sequence is LIM domain-containing protein 2 (127 aa).

At methionine 1 the chain carries N-acetylmethionine. Residues 1–24 (MFQAAGAAQATPSHDAKGGGSSTV) form a disordered region. The LIM zinc-binding domain occupies 38–98 (ETCAACQKTV…KPHFQQLFKS (61 aa)). Zn(2+)-binding residues include cysteine 40, cysteine 43, histidine 61, cysteine 64, cysteine 67, cysteine 70, cysteine 88, and histidine 91.

As to quaternary structure, interacts with ILK.

The protein localises to the cytoplasm. The protein resides in the nucleus. Its function is as follows. Acts as an activator of the protein-kinase ILK, thereby regulating cell motility. This chain is LIM domain-containing protein 2, found in Homo sapiens (Human).